The chain runs to 408 residues: LysM domain-containing protein ARB_01488 (408 aa).

The signal sequence occupies residues 1 to 17 (MVKYALLPLVAVSLVQA). Positions 42 to 91 (SWINVVDASGKLTCDAFLDTINVAKRQFIFWNPQLNSDCSNIQSKASYCA) constitute a LysM 1 domain. The disordered stretch occupies residues 98 to 178 (SKQTRGQMDP…HGPKEAPPPD (81 aa)). The segment covering 106 to 116 (DPPPKTKPLPP) has biased composition (pro residues). LysM domains lie at 270 to 320 (QYHT…RVCV) and 360 to 406 (SFEL…YACV).

The protein resides in the secreted. In terms of biological role, might have a role in sequestration of chitin oligosaccharides (breakdown products of fungal cell walls that are released during invasion and act as triggers of host immunity) to dampen host defense. The protein is LysM domain-containing protein ARB_01488 of Arthroderma benhamiae (strain ATCC MYA-4681 / CBS 112371) (Trichophyton mentagrophytes).